The sequence spans 308 residues: MMDLDKIIASLRDGKHIPEETVFRLCLNSQELLMNEGNVTQVDTPVTICGDIHGQLHDLLTLFEKSGGVEKTRYIFLGDFVDRGFYSLESFLLLLCYKLRYPDRITLIRGNHETRQITKVYGFYDEVVRKYGNSNVWRYCCEVFDYLSLGAIINNSIFCVHGGLSPDMTTVDEIRTIDRKQEVPHEGAMCDLLWSDPEDVDTWSLSPRGAGFLFGKREVDQFLEKNNVELIARAHQLVMEGYKEMFDGGLVTVWSAPNYCYRCGNVAAVLKIDDDLNREYTIFEAVQAQNEVGNAIIPTKKSQMDYFL.

Mn(2+) is bound by residues Asp51, His53, Asp79, and Asn111. Residue His112 is the Proton donor of the active site. His161 and His235 together coordinate Mn(2+).

This sequence belongs to the PPP phosphatase family. PP-4 (PP-X) subfamily. Catalytic subunit of the histone H2A phosphatase complex (HTP-C) containing PPH3, PSY2 and PSY4. Inactivated in a complex with phosphatase methylesterase PPE1 (PP2Ai). Interacts with phosphatase 2A activator RRD1, which can reactivate PP2Ai by dissociating the catalytic subunit from the complex. Interacts with SPT5 and TAP42. Mn(2+) is required as a cofactor. Post-translationally, reversibly methyl esterified on Leu-308 by leucine carboxyl methyltransferase 1 (PPM1) and protein phosphatase methylesterase 1 (PPE1). Carboxyl methylation influences the affinity of the catalytic subunit for the different regulatory subunits, thereby modulating the PP2A holoenzyme's substrate specificity, enzyme activity and cellular localization.

The protein resides in the cytoplasm. Its subcellular location is the nucleus. It catalyses the reaction O-phospho-L-seryl-[protein] + H2O = L-seryl-[protein] + phosphate. The catalysed reaction is O-phospho-L-threonyl-[protein] + H2O = L-threonyl-[protein] + phosphate. Forms the histone H2A phosphatase complex in association with the regulatory subunits PSY2 and PSY4, which dephosphorylates H2AS128ph (gamma-H2A) that has been displaced from sites of DNA lesions in the double-stranded DNA break repair process. Dephosphorylation is necessary for efficient recovery from the DNA damage checkpoint. PPH3 is directly involved in the dephosphorylation and activation of the transcription factor GLN3 in response to nutrient availability. The protein is Serine/threonine-protein phosphatase 4 catalytic subunit (PPH3) of Saccharomyces cerevisiae (strain ATCC 204508 / S288c) (Baker's yeast).